The sequence spans 522 residues: Target of rapamycin complex 2 subunit MAPKAP1 (522 aa).

Ala-2 is modified (N-acetylalanine). Residues 2-184 form an interaction with MAP3K2 region; it reads AFLDNPTIIL…KKIDVYLPLH (183 aa). An interaction with NBN region spans residues 2 to 267; it reads AFLDNPTIIL…GFSTLALVEK (266 aa). Position 86 is a phosphothreonine (Thr-86). Residues Ser-128, Ser-186, Ser-315, and Ser-356 each carry the phosphoserine modification. The CRIM domain occupies 139–267; the sequence is QSILSVRLEQ…GFSTLALVEK (129 aa). Positions 279 to 353 are SIN1-type RBD; that stretch reads LFVRINAAHG…QSAWEFCQVR (75 aa). The SIN1-type PH domain occupies 382–487; that stretch reads HYKSFKVSMI…IVLKVNYILE (106 aa). Arg-393 contacts a 1,2-diacyl-sn-glycero-3-phospho-(1D-myo-inositol-3,4,5-trisphosphate). Phosphothreonine is present on Thr-398. The a 1,2-diacyl-sn-glycero-3-phospho-(1D-myo-inositol-3,4,5-trisphosphate) site is built by Lys-428 and Lys-464. The tract at residues 468–522 is interaction with ATF2; that stretch reads FESDAATVNEIVLKVNYILESRASTARADYFAQKQRKLNRRTSFSFQKEKKSGQQ. Ser-510 carries the phosphoserine modification.

It belongs to the SIN1 family. As to quaternary structure, component of the mechanistic target of rapamycin complex 2 (mTORC2), consisting in two heterotretramers composed of MTOR, MLST8, RICTOR and MAPKAP1/SIN1. The mTORC2 core complex associates with PRR5/PROTOR1 and/or PRR5L/PROTOR2. Contrary to mTORC1, mTORC2 does not bind to and is not sensitive to FKBP12-rapamycin. Interacts with MAP3K2. Interacts with ATF2. Interacts with MAPK8. Interacts with GTP-bound HRAS and KRAS; inhibiting their activity. Interacts with IFNAR2. Phosphorylation at Ser-128 by PKC promotes relocalization to the perinuclear region, where the mTORC2 complex specifically mediates phosphorylation of SGK1. Phosphorylated at Thr-86 by AKT1 or RPS6KB1 in the presence of growth factors; the effect of this phosphorylation is however unclear. According to two studies, phosphorylation at Thr-86 by AKT1 is part of a positive feedback loop that increases mTORC2 activation. According to another study, phosphorylation at Thr-86 and Thr-398 by RPS6KB1 promotes dissociation from the mTORC2 complex, leading to inhibit mTORC2 signaling.

It is found in the cell membrane. The protein resides in the endoplasmic reticulum membrane. The protein localises to the early endosome membrane. It localises to the late endosome membrane. Its subcellular location is the lysosome membrane. It is found in the golgi apparatus membrane. The protein resides in the mitochondrion outer membrane. The protein localises to the cytoplasm. It localises to the perinuclear region. Its subcellular location is the nucleus. With respect to regulation, phosphatidylinositol 3,4,5-trisphosphate (PI(3,4,5)P3) promotes MTOR activation by relieving MAPKAP1/SIN1-mediated inhibition of MTOR that takes place in absence of PI(3,4,5)P3. Functionally, component of the mechanistic target of rapamycin complex 2 (mTORC2), which transduces signals from growth factors to pathways involved in proliferation, cytoskeletal organization, lipogenesis and anabolic output. In response to growth factors, mTORC2 phosphorylates and activates AGC protein kinase family members, including AKT (AKT1, AKT2 and AKT3), PKC (PRKCA, PRKCB and PRKCE) and SGK1. In contrast to mTORC1, mTORC2 is nutrient-insensitive. Within the mTORC2 complex, MAPKAP1/SIN1 acts as a substrate adapter which recognizes and binds AGC protein kinase family members for phosphorylation by MTOR. mTORC2 plays a critical role in AKT1 activation by mediating phosphorylation of different sites depending on the context, such as 'Thr-450', 'Ser-473', 'Ser-477' or 'Thr-479', facilitating the phosphorylation of the activation loop of AKT1 on 'Thr-308' by PDPK1/PDK1 which is a prerequisite for full activation. mTORC2 catalyzes the phosphorylation of SGK1 at 'Ser-422' and of PRKCA on 'Ser-657'. The mTORC2 complex also phosphorylates various proteins involved in insulin signaling, such as FBXW8 and IGF2BP1. mTORC2 acts upstream of Rho GTPases to regulate the actin cytoskeleton, probably by activating one or more Rho-type guanine nucleotide exchange factors. mTORC2 promotes the serum-induced formation of stress-fibers or F-actin. MAPKAP1 inhibits MAP3K2 by preventing its dimerization and autophosphorylation. Inhibits HRAS and KRAS independently of mTORC2 complex. Enhances osmotic stress-induced phosphorylation of ATF2 and ATF2-mediated transcription. Involved in ciliogenesis, regulates cilia length through its interaction with CCDC28B independently of mTORC2 complex. This Pongo abelii (Sumatran orangutan) protein is Target of rapamycin complex 2 subunit MAPKAP1 (MAPKAP1).